We begin with the raw amino-acid sequence, 234 residues long: UPF0758 protein STH371 (234 aa).

The MPN domain occupies 110-232 (DLCNPRAVFE…YTSFRERGLL (123 aa)). Residues His181, His183, and Asp194 each coordinate Zn(2+). The JAMM motif motif lies at 181-194 (HNHPSGDPTPSRED).

It belongs to the UPF0758 family.

The chain is UPF0758 protein STH371 from Symbiobacterium thermophilum (strain DSM 24528 / JCM 14929 / IAM 14863 / T).